The chain runs to 167 residues: Small ribosomal subunit protein uS5 (167 aa).

The region spanning 12–75 (LQEKLIAVNR…EKARRNMVTV (64 aa)) is the S5 DRBM domain.

The protein belongs to the universal ribosomal protein uS5 family. In terms of assembly, part of the 30S ribosomal subunit. Contacts proteins S4 and S8.

In terms of biological role, with S4 and S12 plays an important role in translational accuracy. Its function is as follows. Located at the back of the 30S subunit body where it stabilizes the conformation of the head with respect to the body. The polypeptide is Small ribosomal subunit protein uS5 (Shewanella oneidensis (strain ATCC 700550 / JCM 31522 / CIP 106686 / LMG 19005 / NCIMB 14063 / MR-1)).